Reading from the N-terminus, the 158-residue chain is Low molecular weight phosphotyrosine protein phosphatase (158 aa).

A2 is modified (N-acetylalanine). The active-site Nucleophile is C13. R19 is an active-site residue. Catalysis depends on D130, which acts as the Proton donor. Residues Y132 and Y133 each carry the phosphotyrosine modification.

It belongs to the low molecular weight phosphotyrosine protein phosphatase family. Interacts with EPHA2; dephosphorylates EPHA2. Interacts with EPHB1. In terms of assembly, interacts with the SH3 domain of SPTAN1. There is no interaction observed for isoform 2. Phosphorylated by LCK. Phosphorylation at Tyr-132 increases its phosphatase activity. Widely expressed with highest levels in brain and liver and lowest levels in muscle.

The protein localises to the cytoplasm. It catalyses the reaction O-phospho-L-tyrosyl-[protein] + H2O = L-tyrosyl-[protein] + phosphate. The catalysed reaction is a phosphate monoester + H2O = an alcohol + phosphate. With respect to regulation, inhibited by sulfhydryl reagents. Functionally, acts on tyrosine phosphorylated proteins, low-MW aryl phosphates and natural and synthetic acyl phosphates with differences in substrate specificity between isoform 1 and isoform 2. This is Low molecular weight phosphotyrosine protein phosphatase from Mus musculus (Mouse).